A 317-amino-acid chain; its full sequence is Phosphatidylglycerol--prolipoprotein diacylglyceryl transferase 2 (317 aa).

Transmembrane regions (helical) follow at residues 19–39 (IPLR…VWLG), 51–71 (GVIA…GRLY), 93–113 (VWEG…GAWI), and 120–140 (IPLP…QAIG). Residue arginine 141 participates in a 1,2-diacyl-sn-glycero-3-phospho-(1'-sn-glycerol) binding. A run of 3 helical transmembrane segments spans residues 180–200 (PTFL…LWAA), 211–230 (FALY…YLRI), and 241–261 (LNNW…VVSA). The segment at 275–317 (GAGADGRTDDPRPADASVGLASGPPGNSTPRRATESWNVRNRS) is disordered. Residues 299-317 (PGNSTPRRATESWNVRNRS) show a composition bias toward polar residues.

This sequence belongs to the Lgt family.

The protein resides in the cell membrane. The enzyme catalyses L-cysteinyl-[prolipoprotein] + a 1,2-diacyl-sn-glycero-3-phospho-(1'-sn-glycerol) = an S-1,2-diacyl-sn-glyceryl-L-cysteinyl-[prolipoprotein] + sn-glycerol 1-phosphate + H(+). It functions in the pathway protein modification; lipoprotein biosynthesis (diacylglyceryl transfer). Its function is as follows. Catalyzes the transfer of the diacylglyceryl group from phosphatidylglycerol to the sulfhydryl group of the N-terminal cysteine of a prolipoprotein, the first step in the formation of mature lipoproteins. In Streptomyces coelicolor (strain ATCC BAA-471 / A3(2) / M145), this protein is Phosphatidylglycerol--prolipoprotein diacylglyceryl transferase 2.